A 234-amino-acid chain; its full sequence is Large ribosomal subunit protein uL1 (234 aa).

This sequence belongs to the universal ribosomal protein uL1 family. Part of the 50S ribosomal subunit.

In terms of biological role, binds directly to 23S rRNA. The L1 stalk is quite mobile in the ribosome, and is involved in E site tRNA release. Functionally, protein L1 is also a translational repressor protein, it controls the translation of the L11 operon by binding to its mRNA. This chain is Large ribosomal subunit protein uL1, found in Sulfurovum sp. (strain NBC37-1).